Reading from the N-terminus, the 74-residue chain is uncharacterized protein (74 aa).

This is an uncharacterized protein from Caenorhabditis elegans.